A 191-amino-acid polypeptide reads, in one-letter code: Protein adenylyltransferase NmFic (191 aa).

The Fido domain occupies 37 to 162; it reads GTTAGLQQIH…NDLELRFLLK (126 aa). Residues Lys67, 104 to 107, 112 to 118, and 140 to 143 each bind ATP; these read NIAH, GNGRSTR, and KTLY. The short motif at 182-187 is the Inhibitory (S/T)XXXE(G/N) motif element; sequence SYYYEG. Tyr183 bears the O-AMP-tyrosine; in vitro mark. Glu186 contributes to the ATP binding site.

As to quaternary structure, homodimer. In terms of processing, auto-AMPylation at Tyr-183 in vitro.

The enzyme catalyses L-tyrosyl-[protein] + ATP = O-(5'-adenylyl)-L-tyrosyl-[protein] + diphosphate. It catalyses the reaction L-threonyl-[protein] + ATP = 3-O-(5'-adenylyl)-L-threonyl-[protein] + diphosphate. With respect to regulation, adenylyltransferase activity is inhibited by the inhibitory helix present at the C-terminus: Glu-186 binds ATP and competes with ATP-binding at Arg-118, thereby preventing adenylyltransferase activity. Activation dissociates ATP-binding from Glu-186, allowing ordered binding of the entire ATP moiety with the alpha-phosphate in an orientation that is productive for accepting an incoming target hydroxyl side chain. In terms of biological role, adenylyltransferase that mediates the addition of adenosine 5'-monophosphate (AMP) to specific residues of target proteins. The polypeptide is Protein adenylyltransferase NmFic (Neisseria meningitidis serogroup B (strain ATCC BAA-335 / MC58)).